Consider the following 117-residue polypeptide: uncharacterized protein (117 aa).

Positions 1-19 (MTSNPSSSADQPLSGTTVP) are enriched in polar residues. The tract at residues 1–28 (MTSNPSSSADQPLSGTTVPGSVPGKAPE) is disordered. 2 helical membrane-spanning segments follow: residues 38 to 58 (AAVW…LIFI) and 76 to 96 (LPLG…TVFA).

The protein localises to the cell membrane. This is an uncharacterized protein from Mycobacterium tuberculosis (strain ATCC 25618 / H37Rv).